We begin with the raw amino-acid sequence, 382 residues long: D-galactonate dehydratase (382 aa).

Residue D183 participates in Mg(2+) binding. Catalysis depends on H185, which acts as the Proton donor. Mg(2+) contacts are provided by E209 and E235. Catalysis depends on H285, which acts as the Proton acceptor.

The protein belongs to the mandelate racemase/muconate lactonizing enzyme family. GalD subfamily. The cofactor is Mg(2+).

The catalysed reaction is D-galactonate = 2-dehydro-3-deoxy-D-galactonate + H2O. Its pathway is carbohydrate acid metabolism; D-galactonate degradation; D-glyceraldehyde 3-phosphate and pyruvate from D-galactonate: step 1/3. Catalyzes the dehydration of D-galactonate to 2-keto-3-deoxy-D-galactonate. The sequence is that of D-galactonate dehydratase from Escherichia coli (strain 55989 / EAEC).